Reading from the N-terminus, the 904-residue chain is Toll-like receptor 3 (904 aa).

The N-terminal stretch at 1-23 (MRQTLPCIYFWGGLLPFGMLCAS) is a signal peptide. An LRRNT domain is found at 24-51 (STTKCTVSHEVADCSHLKLTQVPDDLPT). Residues 24–704 (STTKCTVSHE…SCKDSAPFEL (681 aa)) lie on the Lumenal side of the membrane. The cysteines at positions 28 and 37 are disulfide-linked. Asn52, Asn57, and Asn70 each carry an N-linked (GlcNAc...) asparagine glycan. LRR repeat units follow at residues 52–73 (NITVLNLTHNQLRRLPAANFTR), 76–97 (QLTSLDVGFNTISKLEPELCQK), 100–121 (MLKVLNLQHNELSQLSDKTFAF), 124–145 (NLTELHLMSNSIQKIKNNPFVK), 148–168 (NLITLDLSHNGLSSTKLGTQV), and 172–193 (NLQELLLSNNKIQALKSEELDI). The cysteines at positions 95 and 122 are disulfide-linked. Residue Asn124 is glycosylated (N-linked (GlcNAc...) asparagine). Asn196 carries N-linked (GlcNAc...) asparagine glycosylation. 2 LRR repeats span residues 198–219 (SLKKLELSSNQIKEFSPGCFHA) and 222–244 (RLFGLFLNNVQLGPSLTEKLCLE). 5 N-linked (GlcNAc...) asparagine glycosylation sites follow: Asn247, Asn252, Asn265, Asn275, and Asn291. 14 LRR repeats span residues 249-270 (SIRNLSLSNSQLSTTSNTTFLG), 275-296 (NLTMLDLSYNNLNVVGNDSFAW), 299-320 (QLEYFFLEYNNIQHLFSHSLHG), 323-344 (NVRYLNLKRSFTKQSISLASLP), 356-377 (CLEHLNMEDNDIPGIKSNMFTG), 380-400 (NLKYLSLSNSFTSLRTLTNET), 408-429 (PLHILNLTKNKISKIESDAFSW), 432-454 (HLEVLDLGLNEIGQELTGQEWRG), 465-486 (YNKYLQLTRNSFALVPSLQRLM), 507-528 (NLTILDLSNNNIANINDDMLEG), 531-552 (KLEILDLQHNNLARLWKHANPG), 563-584 (HLHILNLESNGFDEIPVEVFKD), 587-608 (ELKIIDLGLNNLNTLPASVFNN), and 611-632 (SLKSLNLQKNLITSVEKKVFGP). N-linked (GlcNAc...) asparagine glycans are attached at residues Asn398 and Asn413. The N-linked (GlcNAc...) asparagine glycan is linked to Asn507. N-linked (GlcNAc...) asparagine glycans are attached at residues Asn636 and Asn662. Positions 645–698 (NPFDCTCESIAWFVNWINETHTNIPELSSHYLCNTPPHYHGFPVRLFDTSSCKD) constitute an LRRCT domain. Disulfide bonds link Cys649/Cys677 and Cys651/Cys696. The helical transmembrane segment at 705 to 725 (FFMINTSILLIFIFIVLLIHF) threads the bilayer. Over 726 to 904 (EGWRISFYWN…VALGSKNSVH (179 aa)) the chain is Cytoplasmic. The TIR domain maps to 754-897 (FEYAAYIIHA…AFRHKLQVAL (144 aa)). Residue Tyr759 is modified to Phosphotyrosine. Residues Lys765, Lys812, and Lys831 each participate in a glycyl lysine isopeptide (Lys-Gly) (interchain with G-Cter in ubiquitin) cross-link. Position 858 is a phosphotyrosine (Tyr858).

Belongs to the Toll-like receptor family. As to quaternary structure, monomer and homodimer; dimerization is triggered by ligand-binding, the signaling unit is composed of one ds-RNA of around 40 bp and two TLR3 molecules, and lateral clustering of signaling units along the length of the ds-RNA ligand is required for TLR3 signal transduction. Interacts (via transmembrane domain) with UNC93B1; the interaction is required for transport from the ER to the endosomes. Interacts with SRC; upon binding of double-stranded RNA. Interacts with TICAM1 (via the TIR domain) in response to poly(I:C) and this interaction is enhanced in the presence of WDFY1. The tyrosine-phosphorylated form (via TIR domain) interacts with WDFY1 (via WD repeat 2) in response to poly(I:C). Heavily N-glycosylated, except on that part of the surface of the ectodomain that is involved in ligand binding. Post-translationally, TLR3 signaling requires a proteolytic cleavage mediated by cathepsins CTSB and CTSH, the cleavage occurs between amino acids 252 and 346. The cleaved form of TLR3 is the predominant form found in endosomes. In terms of processing, ubiquitinated by TRIM3; leading to recognition and sorting of polyubiquitinated TLR3 by the ESCRT complexes. Ubiquitinated by ZNRF1 via 'Lys-63'-linked ubiquitin chains; leading to TLR3 lysosomal trafficking and degradation. Ubiquitinated by RNF170 at Lys-765 via 'Lys-48'-linked ubiquitin chains; leading to TLR3 proteasomal degradation. In terms of tissue distribution, expressed at high level in placenta and pancreas. Also detected in CD11c+ immature dendritic cells. Only expressed in dendritic cells and not in other leukocytes, including monocyte precursors. TLR3 is the TLR that is expressed most strongly in the brain, especially in astrocytes, glia, and neurons.

It localises to the endoplasmic reticulum membrane. Its subcellular location is the endosome membrane. It is found in the early endosome. Its function is as follows. Key component of innate and adaptive immunity. TLRs (Toll-like receptors) control host immune response against pathogens through recognition of molecular patterns specific to microorganisms. TLR3 is a nucleotide-sensing TLR which is activated by double-stranded RNA, a sign of viral infection. Acts via the adapter TRIF/TICAM1, leading to NF-kappa-B activation, IRF3 nuclear translocation, cytokine secretion and the inflammatory response. The sequence is that of Toll-like receptor 3 from Homo sapiens (Human).